The sequence spans 455 residues: Polyadenylation factor subunit 2 (455 aa).

WD repeat units lie at residues 80–119, 122–162, 164–203, 206–245, 248–288, 291–331, and 337–376; these read KVKH…FETI, AHDT…KELD, IHTE…QERV, GHHW…CVST, KFKH…NELM, RDEV…EKPI, and AHEK…DPNA. Disordered stretches follow at residues 406-425 and 430-455; these read EYGA…TQYN and RVPE…GLSI. Positions 432–446 are enriched in basic and acidic residues; it reads PEIKEPTPTTDKEQR.

Its subcellular location is the nucleus. Required for 3'-end cleavage and polyadenylation of pre-mRNAs. Also involved in chromosome segregation where it has a role in chromosome attachment to the mitotic spindle. This Candida glabrata (strain ATCC 2001 / BCRC 20586 / JCM 3761 / NBRC 0622 / NRRL Y-65 / CBS 138) (Yeast) protein is Polyadenylation factor subunit 2 (PFS2).